The sequence spans 197 residues: Guanylate kinase (197 aa).

One can recognise a Guanylate kinase-like domain in the interval 10-187 (GSLFIVSAPA…AYQVLRSILI (178 aa)). An ATP-binding site is contributed by 17–24 (APAGTGKT).

This sequence belongs to the guanylate kinase family.

The protein resides in the cytoplasm. It catalyses the reaction GMP + ATP = GDP + ADP. In terms of biological role, essential for recycling GMP and indirectly, cGMP. This chain is Guanylate kinase, found in Protochlamydia amoebophila (strain UWE25).